Here is a 568-residue protein sequence, read N- to C-terminus: Periplasmic trehalase (568 aa).

The signal sequence occupies residues 1–39 (MPYATARSGDVMSSAAPPCCTSLLGLSLSMFVAPGTLTA). Residues Arg169, 176 to 177 (WD), Asn213, 222 to 224 (RSQ), 294 to 296 (RPE), and Gly327 contribute to the substrate site. Catalysis depends on proton donor/acceptor residues Asp329 and Glu511. Glu526 is a binding site for substrate.

The protein belongs to the glycosyl hydrolase 37 family.

It is found in the periplasm. It carries out the reaction alpha,alpha-trehalose + H2O = alpha-D-glucose + beta-D-glucose. In terms of biological role, provides the cells with the ability to utilize trehalose at high osmolarity by splitting it into glucose molecules that can subsequently be taken up by the phosphotransferase-mediated uptake system. The sequence is that of Periplasmic trehalase from Xanthomonas axonopodis pv. citri (strain 306).